Reading from the N-terminus, the 115-residue chain is T cell receptor beta variable 7-6 (115 aa).

The signal sequence occupies residues 1–21 (MGTSLLCWVVLGFLGTDHTGA). One can recognise an Ig-like domain in the interval 22 to 115 (GVSQSPRYKV…SAMYRCASSL (94 aa)). Cys-42 and Cys-111 are disulfide-bonded.

As to quaternary structure, alpha-beta TR is a heterodimer composed of an alpha and beta chain; disulfide-linked. The alpha-beta TR is associated with the transmembrane signaling CD3 coreceptor proteins to form the TR-CD3 (TcR or TCR). The assembly of alpha-beta TR heterodimers with CD3 occurs in the endoplasmic reticulum where a single alpha-beta TR heterodimer associates with one CD3D-CD3E heterodimer, one CD3G-CD3E heterodimer and one CD247 homodimer forming a stable octameric structure. CD3D-CD3E and CD3G-CD3E heterodimers preferentially associate with TR alpha and TR beta chains, respectively. The association of the CD247 homodimer is the last step of TcR assembly in the endoplasmic reticulum and is required for transport to the cell surface.

It is found in the cell membrane. In terms of biological role, v region of the variable domain of T cell receptor (TR) beta chain that participates in the antigen recognition. Alpha-beta T cell receptors are antigen specific receptors which are essential to the immune response and are present on the cell surface of T lymphocytes. Recognize peptide-major histocompatibility (MH) (pMH) complexes that are displayed by antigen presenting cells (APC), a prerequisite for efficient T cell adaptive immunity against pathogens. Binding of alpha-beta TR to pMH complex initiates TR-CD3 clustering on the cell surface and intracellular activation of LCK that phosphorylates the ITAM motifs of CD3G, CD3D, CD3E and CD247 enabling the recruitment of ZAP70. In turn ZAP70 phosphorylates LAT, which recruits numerous signaling molecules to form the LAT signalosome. The LAT signalosome propagates signal branching to three major signaling pathways, the calcium, the mitogen-activated protein kinase (MAPK) kinase and the nuclear factor NF-kappa-B (NF-kB) pathways, leading to the mobilization of transcription factors that are critical for gene expression and essential for T cell growth and differentiation. The T cell repertoire is generated in the thymus, by V-(D)-J rearrangement. This repertoire is then shaped by intrathymic selection events to generate a peripheral T cell pool of self-MH restricted, non-autoaggressive T cells. Post-thymic interaction of alpha-beta TR with the pMH complexes shapes TR structural and functional avidity. This chain is T cell receptor beta variable 7-6, found in Homo sapiens (Human).